The primary structure comprises 440 residues: D-serine dehydratase (440 aa).

K116 carries the N6-(pyridoxal phosphate)lysine modification.

It belongs to the serine/threonine dehydratase family. DsdA subfamily. As to quaternary structure, monomer. It depends on pyridoxal 5'-phosphate as a cofactor.

The catalysed reaction is D-serine = pyruvate + NH4(+). The sequence is that of D-serine dehydratase from Salmonella enteritidis PT4 (strain P125109).